The primary structure comprises 619 residues: 1-deoxy-D-xylulose-5-phosphate synthase (619 aa).

Residues histidine 63 and 104-106 (GHS) contribute to the thiamine diphosphate site. Position 136 (aspartate 136) interacts with Mg(2+). Residues 137-138 (GS), asparagine 165, tyrosine 272, and glutamate 353 contribute to the thiamine diphosphate site. Position 165 (asparagine 165) interacts with Mg(2+).

Belongs to the transketolase family. DXPS subfamily. Homodimer. Mg(2+) serves as cofactor. Thiamine diphosphate is required as a cofactor.

It carries out the reaction D-glyceraldehyde 3-phosphate + pyruvate + H(+) = 1-deoxy-D-xylulose 5-phosphate + CO2. It participates in metabolic intermediate biosynthesis; 1-deoxy-D-xylulose 5-phosphate biosynthesis; 1-deoxy-D-xylulose 5-phosphate from D-glyceraldehyde 3-phosphate and pyruvate: step 1/1. Functionally, catalyzes the acyloin condensation reaction between C atoms 2 and 3 of pyruvate and glyceraldehyde 3-phosphate to yield 1-deoxy-D-xylulose-5-phosphate (DXP). This is 1-deoxy-D-xylulose-5-phosphate synthase from Wolinella succinogenes (strain ATCC 29543 / DSM 1740 / CCUG 13145 / JCM 31913 / LMG 7466 / NCTC 11488 / FDC 602W) (Vibrio succinogenes).